Consider the following 694-residue polypeptide: Ubiquitin-like modifier-activating enzyme ATG7 (694 aa).

The short motif at 370–375 (GAGTLG) is the GXGXXG motif element. Catalysis depends on Cys-550, which acts as the Glycyl thioester intermediate. Positions 650–689 (ALQEKEYVAELSGLAEVQRRAEEMAAHVDWEEDDDLVDDG) are homodimerization.

The protein belongs to the ATG7 family. In terms of assembly, homodimer. Interacts with ATG8 through a thioester bond between Cys-550 and the C-terminal 'Gly-116' of ATG8 and with ATG12 through a thioester bond between Cys-550 and the C-terminal 'Gly-160' of ATG12. Also interacts with ATG3.

It localises to the cytoplasm. It is found in the preautophagosomal structure. Functionally, E1-like activating enzyme involved in the 2 ubiquitin-like systems required for cytoplasm to vacuole transport (Cvt) and autophagy. Activates ATG12 for its conjugation with ATG5 and ATG8 for its conjugation with phosphatidylethanolamine. Both systems are needed for the ATG8 association to Cvt vesicles and autophagosomes membranes. Autophagy is essential for maintenance of amino acid levels and protein synthesis under nitrogen starvation. Required for selective autophagic degradation of the nucleus (nucleophagy) as well as for mitophagy which contributes to regulate mitochondrial quantity and quality by eliminating the mitochondria to a basal level to fulfill cellular energy requirements and preventing excess ROS production. Autophagy is required for proper vegetative growth, asexual/sexual reproduction, and full virulence. Autophagy is particularly involved in the biosynthesis of deoxynivalenol (DON), an important virulence determinant. This chain is Ubiquitin-like modifier-activating enzyme ATG7, found in Gibberella zeae (strain ATCC MYA-4620 / CBS 123657 / FGSC 9075 / NRRL 31084 / PH-1) (Wheat head blight fungus).